The following is a 102-amino-acid chain: U7-agatoxin-Ao1a (102 aa).

An N-terminal signal peptide occupies residues 1-19 (MTQAFFFLLLVSLVASTLS). The propeptide occupies 20-39 (KEFNFCPRAIDEVCPVKEKR). W101 is modified (tryptophan amide).

Belongs to the venom protein 11 family. 02 (wap-2) subfamily. Contains 5 disulfide bonds. As to expression, expressed by the venom gland.

Its subcellular location is the secreted. The sequence is that of U7-agatoxin-Ao1a from Agelena orientalis (Funnel-web spider).